Here is a 469-residue protein sequence, read N- to C-terminus: UDP-N-acetylmuramate--L-alanine ligase (469 aa).

Residue Gly114–Thr120 participates in ATP binding.

It belongs to the MurCDEF family.

It is found in the cytoplasm. It catalyses the reaction UDP-N-acetyl-alpha-D-muramate + L-alanine + ATP = UDP-N-acetyl-alpha-D-muramoyl-L-alanine + ADP + phosphate + H(+). The protein operates within cell wall biogenesis; peptidoglycan biosynthesis. Its function is as follows. Cell wall formation. The sequence is that of UDP-N-acetylmuramate--L-alanine ligase from Chlorobium phaeovibrioides (strain DSM 265 / 1930) (Prosthecochloris vibrioformis (strain DSM 265)).